The following is a 193-amino-acid chain: Putative nucleotidase YqfW (193 aa).

Belongs to the 5'(3')-deoxyribonucleotidase family.

This Bacillus subtilis (strain 168) protein is Putative nucleotidase YqfW (yqfW).